The chain runs to 121 residues: Small ribosomal subunit protein uS11c (121 aa).

It belongs to the universal ribosomal protein uS11 family. Part of the 30S ribosomal subunit.

It is found in the plastid. The protein localises to the chloroplast. In Cyanidioschyzon merolae (strain NIES-3377 / 10D) (Unicellular red alga), this protein is Small ribosomal subunit protein uS11c.